The chain runs to 313 residues: Beta-ketoacyl-[acyl-carrier-protein] synthase III (313 aa).

Active-site residues include Cys-112 and His-238. Positions 239 to 243 (QANIR) are ACP-binding. Asn-268 is an active-site residue.

It belongs to the thiolase-like superfamily. FabH family. Homodimer.

The protein localises to the cytoplasm. It carries out the reaction malonyl-[ACP] + acetyl-CoA + H(+) = 3-oxobutanoyl-[ACP] + CO2 + CoA. It functions in the pathway lipid metabolism; fatty acid biosynthesis. Its function is as follows. Catalyzes the condensation reaction of fatty acid synthesis by the addition to an acyl acceptor of two carbons from malonyl-ACP. Catalyzes the first condensation reaction which initiates fatty acid synthesis and may therefore play a role in governing the total rate of fatty acid production. Possesses both acetoacetyl-ACP synthase and acetyl transacylase activities. Its substrate specificity determines the biosynthesis of branched-chain and/or straight-chain of fatty acids. The polypeptide is Beta-ketoacyl-[acyl-carrier-protein] synthase III (Staphylococcus aureus (strain bovine RF122 / ET3-1)).